The primary structure comprises 476 residues: Protein Cep89 homolog (476 aa).

2 disordered regions span residues 1 to 29 (MSTR…KKNR) and 172 to 193 (LGEG…APYP). Positions 180–190 (GGSTKVSSSSA) are enriched in polar residues.

Its subcellular location is the cytoplasm. The protein resides in the cytosol. The protein localises to the mitochondrion intermembrane space. In terms of biological role, required for mitochondrial complex IV activity. May be involved in non-associative learning. The polypeptide is Protein Cep89 homolog (Cep89) (Drosophila melanogaster (Fruit fly)).